The sequence spans 160 residues: Endoribonuclease YbeY (160 aa).

Zn(2+) is bound by residues H111, H115, and H121.

The protein belongs to the endoribonuclease YbeY family. Zn(2+) is required as a cofactor.

The protein localises to the cytoplasm. Single strand-specific metallo-endoribonuclease involved in late-stage 70S ribosome quality control and in maturation of the 3' terminus of the 16S rRNA. This Stutzerimonas stutzeri (strain A1501) (Pseudomonas stutzeri) protein is Endoribonuclease YbeY.